Here is a 698-residue protein sequence, read N- to C-terminus: Polyribonucleotide nucleotidyltransferase (698 aa).

Residues Asp-485 and Asp-491 each coordinate Mg(2+). One can recognise a KH domain in the interval 552–612 (PRVEMMTIPE…SDLKGAKSIV (61 aa)). Residues 622 to 690 (GMVYDGTVKK…KLGRLNLSYV (69 aa)) form the S1 motif domain.

It belongs to the polyribonucleotide nucleotidyltransferase family. The cofactor is Mg(2+).

The protein localises to the cytoplasm. The enzyme catalyses RNA(n+1) + phosphate = RNA(n) + a ribonucleoside 5'-diphosphate. In terms of biological role, involved in mRNA degradation. Catalyzes the phosphorolysis of single-stranded polyribonucleotides processively in the 3'- to 5'-direction. The polypeptide is Polyribonucleotide nucleotidyltransferase (Treponema denticola (strain ATCC 35405 / DSM 14222 / CIP 103919 / JCM 8153 / KCTC 15104)).